The chain runs to 208 residues: Phosphoheptose isomerase (208 aa).

Positions 38 to 200 constitute an SIS domain; it reads MALTLARGRK…LFENVLALQP (163 aa). Position 53–55 (53–55) interacts with substrate; sequence NGG. The Zn(2+) site is built by histidine 62 and glutamate 66. Substrate contacts are provided by residues glutamate 66, 95–96, 121–123, serine 126, and glutamine 173; these read ND and STS. The Zn(2+) site is built by glutamine 173 and histidine 181.

The protein belongs to the SIS family. GmhA subfamily. Homotetramer. Requires Zn(2+) as cofactor.

Its subcellular location is the cytoplasm. It carries out the reaction 2 D-sedoheptulose 7-phosphate = D-glycero-alpha-D-manno-heptose 7-phosphate + D-glycero-beta-D-manno-heptose 7-phosphate. Its pathway is carbohydrate biosynthesis; D-glycero-D-manno-heptose 7-phosphate biosynthesis; D-glycero-alpha-D-manno-heptose 7-phosphate and D-glycero-beta-D-manno-heptose 7-phosphate from sedoheptulose 7-phosphate: step 1/1. Functionally, catalyzes the isomerization of sedoheptulose 7-phosphate in D-glycero-D-manno-heptose 7-phosphate. The protein is Phosphoheptose isomerase of Nitratidesulfovibrio vulgaris (strain DSM 19637 / Miyazaki F) (Desulfovibrio vulgaris).